We begin with the raw amino-acid sequence, 392 residues long: Phosphoglycerate kinase (392 aa).

Substrate-binding positions include Asp21 to Asn23, Arg36, His59 to Arg62, Arg114, and Arg147. ATP contacts are provided by residues Lys198, Glu320, and Gly346–Thr349.

It belongs to the phosphoglycerate kinase family. As to quaternary structure, monomer.

The protein resides in the cytoplasm. It catalyses the reaction (2R)-3-phosphoglycerate + ATP = (2R)-3-phospho-glyceroyl phosphate + ADP. It participates in carbohydrate degradation; glycolysis; pyruvate from D-glyceraldehyde 3-phosphate: step 2/5. This Neisseria meningitidis serogroup C (strain 053442) protein is Phosphoglycerate kinase.